Consider the following 258-residue polypeptide: MMFKNFPFFKGKKDTSFDHLVEEVKKGYIPEHIAIIMDGNGRWAKRRAMPRIAGHHEGMQVVKKITKFASKLNVKVLTLYAFSTENWKRPKKEVDYLMKLPEEFLGTFLPELIEENVQVRVIGQQDRLPTHTRRAMEKAMEETKENTGLILNFALNYGSRDEIVSAVQHMMKDREEGKVRVEDVSEEMLSSYLMTSSLPDPELLIRTSGELRISNFMLWQIAYSEFWFTDVYWPDFTEEHLLNAITDFQHRGRRFGGV.

Residue aspartate 38 is part of the active site. Aspartate 38 provides a ligand contact to Mg(2+). Substrate-binding positions include 39–42 (GNGR), tryptophan 43, arginine 51, histidine 55, and 83–85 (STE). Residue asparagine 86 is the Proton acceptor of the active site. Substrate is bound by residues tryptophan 87, arginine 89, arginine 206, and 212–214 (RIS). Residue glutamate 225 coordinates Mg(2+).

Belongs to the UPP synthase family. As to quaternary structure, homodimer. Mg(2+) serves as cofactor.

Its function is as follows. Catalyzes the condensation of isopentenyl diphosphate (IPP) with allylic pyrophosphates generating different type of terpenoids. The polypeptide is Isoprenyl transferase (Bacillus cereus (strain ATCC 10987 / NRS 248)).